A 155-amino-acid polypeptide reads, in one-letter code: Ribosomal RNA large subunit methyltransferase H (155 aa).

Residues leucine 72, glycine 103, and 122–127 (LSPLTL) each bind S-adenosyl-L-methionine.

This sequence belongs to the RNA methyltransferase RlmH family. Homodimer.

It is found in the cytoplasm. It carries out the reaction pseudouridine(1915) in 23S rRNA + S-adenosyl-L-methionine = N(3)-methylpseudouridine(1915) in 23S rRNA + S-adenosyl-L-homocysteine + H(+). Its function is as follows. Specifically methylates the pseudouridine at position 1915 (m3Psi1915) in 23S rRNA. This chain is Ribosomal RNA large subunit methyltransferase H, found in Aeromonas salmonicida (strain A449).